We begin with the raw amino-acid sequence, 333 residues long: Glycerol-3-phosphate dehydrogenase [NAD(P)+] (333 aa).

NADPH contacts are provided by serine 10, tryptophan 11, histidine 31, arginine 32, and lysine 105. Sn-glycerol 3-phosphate contacts are provided by lysine 105, glycine 136, and serine 138. Alanine 140 is an NADPH binding site. Sn-glycerol 3-phosphate is bound by residues lysine 191, aspartate 244, serine 254, arginine 255, and asparagine 256. Lysine 191 acts as the Proton acceptor in catalysis. Arginine 255 contacts NADPH. 2 residues coordinate NADPH: isoleucine 279 and glutamate 281.

It belongs to the NAD-dependent glycerol-3-phosphate dehydrogenase family.

It localises to the cytoplasm. It catalyses the reaction sn-glycerol 3-phosphate + NAD(+) = dihydroxyacetone phosphate + NADH + H(+). The catalysed reaction is sn-glycerol 3-phosphate + NADP(+) = dihydroxyacetone phosphate + NADPH + H(+). The protein operates within membrane lipid metabolism; glycerophospholipid metabolism. Catalyzes the reduction of the glycolytic intermediate dihydroxyacetone phosphate (DHAP) to sn-glycerol 3-phosphate (G3P), the key precursor for phospholipid synthesis. The protein is Glycerol-3-phosphate dehydrogenase [NAD(P)+] of Chlorobium chlorochromatii (strain CaD3).